The chain runs to 311 residues: Alpha/beta hydrolase domain-containing protein 17C (311 aa).

Positions 48 to 67 (EAPASTAQQPPREEGSGEPA) are disordered. Residues Ser193, Asp258, and His287 each act as charge relay system in the active site.

It belongs to the AB hydrolase superfamily. ABHD17 family. Palmitoylated on cysteine residues located in a cysteine cluster at the N-terminus which promotes membrane localization.

Its subcellular location is the recycling endosome membrane. It is found in the cell projection. The protein resides in the dendritic spine. The protein localises to the postsynaptic density membrane. The enzyme catalyses S-hexadecanoyl-L-cysteinyl-[protein] + H2O = L-cysteinyl-[protein] + hexadecanoate + H(+). Hydrolyzes fatty acids from S-acylated cysteine residues in proteins. Has depalmitoylating activity towards NRAS. The chain is Alpha/beta hydrolase domain-containing protein 17C from Xenopus laevis (African clawed frog).